The sequence spans 290 residues: N-acetylmannosamine kinase (290 aa).

ATP contacts are provided by residues 5-12 and 132-139; these read AIDIGGTK and GVGGGVVS. Zn(2+) is bound by residues His-156, Cys-166, Cys-168, and Cys-173.

This sequence belongs to the ROK (NagC/XylR) family. NanK subfamily. Homodimer.

It carries out the reaction an N-acyl-D-mannosamine + ATP = an N-acyl-D-mannosamine 6-phosphate + ADP + H(+). It functions in the pathway amino-sugar metabolism; N-acetylneuraminate degradation; D-fructose 6-phosphate from N-acetylneuraminate: step 2/5. In terms of biological role, catalyzes the phosphorylation of N-acetylmannosamine (ManNAc) to ManNAc-6-P. The sequence is that of N-acetylmannosamine kinase from Citrobacter koseri (strain ATCC BAA-895 / CDC 4225-83 / SGSC4696).